The sequence spans 356 residues: Nicotinate-nucleotide--dimethylbenzimidazole phosphoribosyltransferase (356 aa).

Glu317 acts as the Proton acceptor in catalysis.

Belongs to the CobT family. Homodimer.

It catalyses the reaction 5,6-dimethylbenzimidazole + nicotinate beta-D-ribonucleotide = alpha-ribazole 5'-phosphate + nicotinate + H(+). It participates in nucleoside biosynthesis; alpha-ribazole biosynthesis; alpha-ribazole from 5,6-dimethylbenzimidazole: step 1/2. Its function is as follows. Catalyzes the synthesis of alpha-ribazole-5'-phosphate from nicotinate mononucleotide (NAMN) and 5,6-dimethylbenzimidazole (DMB). The protein is Nicotinate-nucleotide--dimethylbenzimidazole phosphoribosyltransferase of Salmonella gallinarum (strain 287/91 / NCTC 13346).